Here is a 234-residue protein sequence, read N- to C-terminus: Segregation and condensation protein A (234 aa).

The protein belongs to the ScpA family. Component of a cohesin-like complex composed of ScpA, ScpB and the Smc homodimer, in which ScpA and ScpB bind to the head domain of Smc. The presence of the three proteins is required for the association of the complex with DNA.

The protein localises to the cytoplasm. Participates in chromosomal partition during cell division. May act via the formation of a condensin-like complex containing Smc and ScpB that pull DNA away from mid-cell into both cell halves. This is Segregation and condensation protein A from Streptococcus pyogenes serotype M12 (strain MGAS2096).